The primary structure comprises 503 residues: Glycerol kinase (503 aa).

Thr17 is an ADP binding site. ATP contacts are provided by Thr17, Thr18, and Ser19. Thr17 serves as a coordination point for sn-glycerol 3-phosphate. ADP is bound at residue Arg21. Sn-glycerol 3-phosphate contacts are provided by Arg87, Glu88, Tyr141, and Asp245. Glycerol contacts are provided by Arg87, Glu88, Tyr141, Asp245, and Gln246. Thr267 and Gly310 together coordinate ADP. ATP is bound by residues Thr267, Gly310, Gln314, and Gly411. 2 residues coordinate ADP: Gly411 and Asn415.

Belongs to the FGGY kinase family.

It carries out the reaction glycerol + ATP = sn-glycerol 3-phosphate + ADP + H(+). It participates in polyol metabolism; glycerol degradation via glycerol kinase pathway; sn-glycerol 3-phosphate from glycerol: step 1/1. Its activity is regulated as follows. Inhibited by fructose 1,6-bisphosphate (FBP). Key enzyme in the regulation of glycerol uptake and metabolism. Catalyzes the phosphorylation of glycerol to yield sn-glycerol 3-phosphate. This chain is Glycerol kinase, found in Pseudomonas tolaasii.